The sequence spans 384 residues: N-acetylneuraminate epimerase (384 aa).

The N-terminal stretch at 1–29 (MGMQMKNFKKMMTLMALCLSVAITTSGYA) is a signal peptide. 7 Kelch repeats span residues 51 to 95 (VIYV…VFLN), 97 to 149 (KLYV…VKLN), 151 to 184 (TMVL…KVIY), 185 to 230 (NYFN…VMEN), 233 to 282 (LMLI…LAGA), 304 to 353 (QNYT…SYGD), and 355 to 384 (VFLI…LLIK). The active-site Proton acceptor is the Glu-239.

The protein belongs to the NanM family. Homodimer.

The protein localises to the periplasm. It catalyses the reaction N-acetyl-alpha-neuraminate = N-acetyl-beta-neuraminate. In terms of biological role, converts alpha-N-acetylneuranimic acid (Neu5Ac) to the beta-anomer, accelerating the equilibrium between the alpha- and beta-anomers. Probably facilitates sialidase-negative bacteria to compete successfully for limited amounts of extracellular Neu5Ac, which is likely taken up in the beta-anomer. In addition, the rapid removal of sialic acid from solution might be advantageous to the bacterium to damp down host responses. The chain is N-acetylneuraminate epimerase from Salmonella typhi.